A 123-amino-acid chain; its full sequence is Large ribosomal subunit protein bL12 (123 aa).

This sequence belongs to the bacterial ribosomal protein bL12 family. In terms of assembly, homodimer. Part of the ribosomal stalk of the 50S ribosomal subunit. Forms a multimeric L10(L12)X complex, where L10 forms an elongated spine to which 2 to 4 L12 dimers bind in a sequential fashion. Binds GTP-bound translation factors.

Functionally, forms part of the ribosomal stalk which helps the ribosome interact with GTP-bound translation factors. Is thus essential for accurate translation. In Chlorobium luteolum (strain DSM 273 / BCRC 81028 / 2530) (Pelodictyon luteolum), this protein is Large ribosomal subunit protein bL12.